The primary structure comprises 235 residues: Large ribosomal subunit protein uL1 (235 aa).

Belongs to the universal ribosomal protein uL1 family. As to quaternary structure, part of the 50S ribosomal subunit.

Functionally, binds directly to 23S rRNA. The L1 stalk is quite mobile in the ribosome, and is involved in E site tRNA release. Its function is as follows. Protein L1 is also a translational repressor protein, it controls the translation of the L11 operon by binding to its mRNA. The polypeptide is Large ribosomal subunit protein uL1 (Paenarthrobacter aurescens (strain TC1)).